Here is a 377-residue protein sequence, read N- to C-terminus: 5-hydroxytryptamine receptor 1D (377 aa).

The disordered stretch occupies residues 1–23; it reads MSPLNQSAEGLPQEASNRSLNAT. The Extracellular portion of the chain corresponds to 1-38; that stretch reads MSPLNQSAEGLPQEASNRSLNATETSEAWDPRTLQALK. N-linked (GlcNAc...) asparagine glycosylation is found at Asn5, Asn17, and Asn21. A helical transmembrane segment spans residues 39–64; the sequence is ISLAVVLSVITLATVLSNAFVLTTIL. The Cytoplasmic portion of the chain corresponds to 65 to 75; it reads LTRKLHTPANY. The chain crosses the membrane as a helical span at residues 76-97; that stretch reads LIGSLATTDLLVSILVMPISIA. The Extracellular segment spans residues 98–109; sequence YTITHTWNFGQI. The chain crosses the membrane as a helical span at residues 110 to 134; the sequence is LCDIWLSSDITCCTASILHLCVIAL. An intrachain disulfide couples Cys111 to Cys188. 2 residues coordinate serotonin: Asp118 and Cys122. Positions 135 to 137 match the DRY motif; important for ligand-induced conformation changes motif; the sequence is DRY. At 135-154 the chain is on the cytoplasmic side; sequence DRYWAITDALEYSKRRTAGH. The helical transmembrane segment at 155–176 threads the bilayer; it reads AATMIAIVWAISICISIPPLFW. The Extracellular portion of the chain corresponds to 177–194; the sequence is RQAKAQEEMSDCLVNTSQ. Residues 195–218 form a helical membrane-spanning segment; that stretch reads ISYTIYSTCGAFYIPSVLLIILYG. The Cytoplasmic segment spans residues 219–300; it reads RIYRAARNRI…ISAARERKAT (82 aa). The chain crosses the membrane as a helical span at residues 301-326; the sequence is KILGIILGAFIICWLPFFVVSLVLPI. Ser321 contributes to the serotonin binding site. The Extracellular portion of the chain corresponds to 327-335; the sequence is CRDSCWIHP. A helical transmembrane segment spans residues 336 to 359; it reads ALFDFFTWLGYLNSLINPIIYTVF. The NPxxY motif; important for ligand-induced conformation changes and signaling motif lies at 352–356; it reads NPIIY. The Cytoplasmic portion of the chain corresponds to 360-377; that stretch reads NEEFRQAFQKIVPFRKAS.

The protein belongs to the G-protein coupled receptor 1 family. In terms of assembly, homodimer. Heterodimer with HTR1B. As to expression, detected in brain neocortex and caudate nucleus (at protein level).

It localises to the cell membrane. G-protein coupled receptor for 5-hydroxytryptamine (serotonin). Also functions as a receptor for ergot alkaloid derivatives, various anxiolytic and antidepressant drugs and other psychoactive substances. Ligand binding causes a conformation change that triggers signaling via guanine nucleotide-binding proteins (G proteins) and modulates the activity of downstream effectors, such as adenylate cyclase. HTR1D is coupled to G(i)/G(o) G alpha proteins and mediates inhibitory neurotransmission by inhibiting adenylate cyclase activity. Regulates the release of 5-hydroxytryptamine in the brain, and thereby affects neural activity. May also play a role in regulating the release of other neurotransmitters. May play a role in vasoconstriction. In Homo sapiens (Human), this protein is 5-hydroxytryptamine receptor 1D.